A 527-amino-acid chain; its full sequence is Coatomer subunit delta (527 aa).

Over residues 166 to 175 (IDKSKIEKNK) the composition is skewed to basic and acidic residues. Disordered stretches follow at residues 166-187 (IDKSKIEKNKPGGFSSMGSMGS) and 217-250 (SDVDPINTKPKDRSRSSVTAPPKSSGMKLGKSGK). Composition is skewed to low complexity over residues 177–187 (GGFSSMGSMGS) and 239–250 (KSSGMKLGKSGK). Residues 282-527 (TDPFTLTVEE…QLIAQNYQVI (246 aa)) enclose the MHD domain.

Belongs to the adaptor complexes medium subunit family. Delta-COP subfamily. As to quaternary structure, oligomeric complex that consists of at least the alpha, beta, beta', gamma, delta, epsilon and zeta subunits.

The protein localises to the cytoplasm. Its subcellular location is the golgi apparatus membrane. It is found in the cytoplasmic vesicle. It localises to the COPI-coated vesicle membrane. The coatomer is a cytosolic protein complex that binds to dilysine motifs and reversibly associates with Golgi non-clathrin-coated vesicles, which further mediate biosynthetic protein transport from the ER, via the Golgi up to the trans Golgi network. Coatomer complex is required for budding from Golgi membranes, and is essential for the retrograde Golgi-to-ER transport of dilysine-tagged proteins. The chain is Coatomer subunit delta from Arabidopsis thaliana (Mouse-ear cress).